The sequence spans 199 residues: MATAGRRGGAASERRERRESRRQEASPEKSNFLERVVTINRVAKVVKGGRRFSFTALVVVGDGNGMVGVGYGKAREVPAAIAKGVEEAKKHFFTVPRVQGTIPHPVIGEAAAGVVLLRPASPGTGVIAGGPVRAVLECAGVRDVLSKSLGSDNAVNIVHATVKALRALVPPEKVAVRRGLPLEEVAPPALLRAKAEAGV.

A disordered region spans residues 1-29 (MATAGRRGGAASERRERRESRRQEASPEK). Basic and acidic residues predominate over residues 12 to 27 (SERRERRESRRQEASP). Residues 32–95 (FLERVVTINR…EEAKKHFFTV (64 aa)) enclose the S5 DRBM domain.

The protein belongs to the universal ribosomal protein uS5 family. In terms of assembly, part of the 30S ribosomal subunit. Contacts proteins S4 and S8.

Functionally, with S4 and S12 plays an important role in translational accuracy. Located at the back of the 30S subunit body where it stabilizes the conformation of the head with respect to the body. The sequence is that of Small ribosomal subunit protein uS5 from Acidothermus cellulolyticus (strain ATCC 43068 / DSM 8971 / 11B).